Here is a 96-residue protein sequence, read N- to C-terminus: Copper-sensing transcriptional repressor RicR (96 aa).

At Thr2 the chain carries N-acetylthreonine. 3 residues coordinate Cu cation: Cys38, His63, and Cys67.

The protein belongs to the CsoR family.

Its subcellular location is the cytoplasm. Under low copper conditions, represses the expression of lpqS, Rv2963, mymT, socA, socB, mmcO and its own expression. In the presence of copper, RicR dissociates from DNA, leading to the expression of the target genes. Members of the RicR regulon are important for copper resistance during infections and full virulence in a mouse model of infection. The chain is Copper-sensing transcriptional repressor RicR from Mycobacterium tuberculosis (strain ATCC 25618 / H37Rv).